A 184-amino-acid polypeptide reads, in one-letter code: UPF0302 protein OB1778 (184 aa).

The protein belongs to the UPF0302 family.

In Oceanobacillus iheyensis (strain DSM 14371 / CIP 107618 / JCM 11309 / KCTC 3954 / HTE831), this protein is UPF0302 protein OB1778.